We begin with the raw amino-acid sequence, 367 residues long: Histidinol-phosphate aminotransferase (367 aa).

Lys-222 carries the post-translational modification N6-(pyridoxal phosphate)lysine.

The protein belongs to the class-II pyridoxal-phosphate-dependent aminotransferase family. Histidinol-phosphate aminotransferase subfamily. Pyridoxal 5'-phosphate is required as a cofactor.

It catalyses the reaction L-histidinol phosphate + 2-oxoglutarate = 3-(imidazol-4-yl)-2-oxopropyl phosphate + L-glutamate. It functions in the pathway amino-acid biosynthesis; L-histidine biosynthesis; L-histidine from 5-phospho-alpha-D-ribose 1-diphosphate: step 7/9. The sequence is that of Histidinol-phosphate aminotransferase from Methanosphaera stadtmanae (strain ATCC 43021 / DSM 3091 / JCM 11832 / MCB-3).